The chain runs to 61 residues: 14-3-3-like protein (61 aa).

Belongs to the 14-3-3 family.

The sequence is that of 14-3-3-like protein from Zea mays (Maize).